The primary structure comprises 543 residues: MTFAELVDRVGSKGPFQLLHTVLLGLPILGMANHNLLQIFTAPTPAHHCRPPPNASAGPWVLPTGLNGKPETCLRFVYPPNASLPNDTRGATEPCLDGWIYNIVDRDSIVTEWDLVCSSSKLKEMAQSVFMAGILVGGLVLGALSDRFGRKPILIFSYLLLGASGSGAAFSPTFSIYAVFRFLCGFSISGISLSTAILNVEWVSTRFRAIKSIAVGFFYTFGQFILPGLAYAIPQWRWLQLTVSVPFLTFFLLSWWLPESIRWMVLSGKSSKALKTLRQVAIFNGKKEEGEKLSLEELKLNLQKEISLAKARHGIADLFRTPVLRRVTLCLSLAWFATGFAYYSLAMGVEEFGVNLYVLQLIFGGVDVPAKFITMLSISYLGRHITEGIVLLLAGGCILALIFVPLDLMTLRTVLAVFGKGCLSGSFSCLFLYTSELYPTVIRQTGMGASNLWARVGSMTAPLVKITGELQPFIPNIIFGTIALLGGSAALFLPETLNRPLPETIEDIETWSLRAKEPKPEPEAEKSSQRIPLQPCEPGPGPS.

Over 1–21 the chain is Cytoplasmic; sequence MTFAELVDRVGSKGPFQLLHT. Residues 22 to 42 form a helical membrane-spanning segment; the sequence is VLLGLPILGMANHNLLQIFTA. At 43–124 the chain is on the extracellular side; the sequence is PTPAHHCRPP…LVCSSSKLKE (82 aa). An N-linked (GlcNAc...) asparagine glycan is attached at Asn-81. Residues 125 to 145 traverse the membrane as a helical segment; sequence MAQSVFMAGILVGGLVLGALS. Residues 146-151 lie on the Cytoplasmic side of the membrane; the sequence is DRFGRK. Residues 152–172 form a helical membrane-spanning segment; sequence PILIFSYLLLGASGSGAAFSP. Topologically, residues 173 to 181 are extracellular; sequence TFSIYAVFR. The helical transmembrane segment at 182 to 202 threads the bilayer; it reads FLCGFSISGISLSTAILNVEW. Residues 203-212 lie on the Cytoplasmic side of the membrane; it reads VSTRFRAIKS. Residues 213–233 traverse the membrane as a helical segment; the sequence is IAVGFFYTFGQFILPGLAYAI. The Extracellular segment spans residues 234–237; that stretch reads PQWR. A helical membrane pass occupies residues 238 to 258; that stretch reads WLQLTVSVPFLTFFLLSWWLP. The Cytoplasmic segment spans residues 259–328; the sequence is ESIRWMVLSG…FRTPVLRRVT (70 aa). Residues 329-349 form a helical membrane-spanning segment; the sequence is LCLSLAWFATGFAYYSLAMGV. The Extracellular segment spans residues 350 to 355; the sequence is EEFGVN. Residues 356 to 376 traverse the membrane as a helical segment; that stretch reads LYVLQLIFGGVDVPAKFITML. The Cytoplasmic portion of the chain corresponds to 377–388; the sequence is SISYLGRHITEG. Residues 389–409 form a helical membrane-spanning segment; sequence IVLLLAGGCILALIFVPLDLM. The Extracellular segment spans residues 410-412; that stretch reads TLR. The helical transmembrane segment at 413–433 threads the bilayer; it reads TVLAVFGKGCLSGSFSCLFLY. At 434 to 472 the chain is on the cytoplasmic side; that stretch reads TSELYPTVIRQTGMGASNLWARVGSMTAPLVKITGELQP. The chain crosses the membrane as a helical span at residues 473–493; that stretch reads FIPNIIFGTIALLGGSAALFL. Topologically, residues 494–543 are extracellular; it reads PETLNRPLPETIEDIETWSLRAKEPKPEPEAEKSSQRIPLQPCEPGPGPS. The disordered stretch occupies residues 513–543; the sequence is LRAKEPKPEPEAEKSSQRIPLQPCEPGPGPS. Basic and acidic residues predominate over residues 514 to 528; the sequence is RAKEPKPEPEAEKSS.

The protein belongs to the major facilitator (TC 2.A.1) superfamily. Organic cation transporter (TC 2.A.1.19) family. Expressed in kidney.

It is found in the basolateral cell membrane. The catalysed reaction is estrone 3-sulfate(out) + glutarate(in) = estrone 3-sulfate(in) + glutarate(out). It carries out the reaction estrone 3-sulfate(in) + 2-oxoglutarate(out) = estrone 3-sulfate(out) + 2-oxoglutarate(in). It catalyses the reaction glutarate(in) + 2-oxoglutarate(out) = glutarate(out) + 2-oxoglutarate(in). The enzyme catalyses urate(in) + 2-oxoglutarate(out) = urate(out) + 2-oxoglutarate(in). The catalysed reaction is taurocholate(out) + glutarate(in) = taurocholate(in) + glutarate(out). It carries out the reaction dehydroepiandrosterone 3-sulfate(out) + glutarate(in) = dehydroepiandrosterone 3-sulfate(in) + glutarate(out). It catalyses the reaction prostaglandin F2alpha(out) + glutarate(in) = prostaglandin F2alpha(in) + glutarate(out). The enzyme catalyses prostaglandin F2alpha(out) + 2-oxoglutarate(in) = prostaglandin F2alpha(in) + 2-oxoglutarate(out). The catalysed reaction is (R)-carnitine(out) + 2-oxoglutarate(in) = (R)-carnitine(in) + 2-oxoglutarate(out). It carries out the reaction glutarate(in) + (R)-carnitine(out) = glutarate(out) + (R)-carnitine(in). It catalyses the reaction prostaglandin E2(out) + 2-oxoglutarate(in) = prostaglandin E2(in) + 2-oxoglutarate(out). The enzyme catalyses prostaglandin E2(out) + glutarate(in) = prostaglandin E2(in) + glutarate(out). The catalysed reaction is urate(in) + glutarate(out) = urate(out) + glutarate(in). It carries out the reaction taurocholate(out) + 2-oxoglutarate(in) = taurocholate(in) + 2-oxoglutarate(out). It catalyses the reaction dehydroepiandrosterone 3-sulfate(out) + 2-oxoglutarate(in) = dehydroepiandrosterone 3-sulfate(in) + 2-oxoglutarate(out). The enzyme catalyses kynurenate(out) + a dicarboxylate(in) = kynurenate(in) + a dicarboxylate(out). The catalysed reaction is (indol-3-yl)acetate(out) + a dicarboxylate(in) = (indol-3-yl)acetate(in) + a dicarboxylate(out). It carries out the reaction indoxyl sulfate(out) + a dicarboxylate(in) = indoxyl sulfate(in) + a dicarboxylate(out). It catalyses the reaction N-benzoylglycine(out) + a dicarboxylate(in) = N-benzoylglycine(in) + a dicarboxylate(out). The enzyme catalyses 3-carboxy-4-methyl-5-propyl-2-furanpropanoate(out) + a dicarboxylate(in) = 3-carboxy-4-methyl-5-propyl-2-furanpropanoate(in) + a dicarboxylate(out). The catalysed reaction is (6R)-L-erythro-5,6,7,8-tetrahydrobiopterin(out) + a dicarboxylate(in) = (6R)-L-erythro-5,6,7,8-tetrahydrobiopterin(in) + a dicarboxylate(out). It carries out the reaction L-erythro-7,8-dihydrobiopterin(out) + a dicarboxylate(in) = L-erythro-7,8-dihydrobiopterin(in) + a dicarboxylate(out). It catalyses the reaction L-sepiapterin(out) + a dicarboxylate(in) = L-sepiapterin(in) + a dicarboxylate(out). Functions as an organic anion/dicarboxylate exchanger that couples organic anion uptake indirectly to the sodium gradient. Transports organic anions such as estrone 3-sulfate (E1S) and urate in exchange for dicarboxylates such as glutarate or ketoglutarate (2-oxoglutarate). Plays an important role in the excretion of endogenous and exogenous organic anions, especially from the kidney and the brain. E1S transport is pH- and chloride-dependent and may also involve E1S/cGMP exchange. Responsible for the transport of prostaglandin E2 (PGE2) and prostaglandin F2(alpha) (PGF2(alpha)) in the basolateral side of the renal tubule. Involved in the transport of neuroactive tryptophan metabolites kynurenate and xanthurenate. Functions as a biopterin transporters involved in the uptake and the secretion of coenzymes tetrahydrobiopterin (BH4), dihydrobiopterin (BH2) and sepiapterin to urine, thereby determining baseline levels of blood biopterins. May be involved in the basolateral transport of steviol, a metabolite of the popular sugar substitute stevioside. May participate in the detoxification/ renal excretion of drugs and xenobiotics, such as the histamine H(2)-receptor antagonists fexofenadine and cimetidine, the antibiotic benzylpenicillin (PCG), the anionic herbicide 2,4-dichloro-phenoxyacetate (2,4-D), the diagnostic agent p-aminohippurate (PAH), the antiviral acyclovir (ACV), and the mycotoxin ochratoxin (OTA), by transporting these exogenous organic anions across the cell membrane in exchange for dicarboxylates such as 2-oxoglutarate. Contributes to the renal uptake of potent uremic toxins (indoxyl sulfate (IS), indole acetate (IA), hippurate/N-benzoylglycine (HA) and 3-carboxy-4-methyl-5-propyl-2-furanpropionate (CMPF)), pravastatin, PCG, E1S and dehydroepiandrosterone sulfate (DHEAS), and is partly involved in the renal uptake of temocaprilat (an angiotensin-converting enzyme (ACE) inhibitor). May contribute to the release of cortisol in the adrenals. Involved in one of the detoxification systems on the choroid plexus (CP), removes substrates such as E1S or taurocholate (TC), PCG, 2,4-D and PAH, from the cerebrospinal fluid (CSF) to the blood for eventual excretion in urine and bile. Also contributes to the uptake of several other organic compounds such as the prostanoids prostaglandin E(2) and prostaglandin F(2-alpha), L-carnitine, and the therapeutic drugs allopurinol, 6-mercaptopurine (6-MP) and 5-fluorouracil (5-FU). Mediates the transport of PAH, PCG, and the statins pravastatin and pitavastatin, from the cerebrum into the blood circulation across the blood-brain barrier (BBB). In summary, plays a role in the efflux of drugs and xenobiotics, helping reduce their undesired toxicological effects on the body. The chain is Organic anion transporter 3 (SLC22A8) from Sus scrofa (Pig).